Here is a 420-residue protein sequence, read N- to C-terminus: Putative U-box domain-containing protein 58 (420 aa).

The MIF4G domain occupies 4 to 168 (NSYVLFARLC…EDALAMKKED (165 aa)). Positions 139–352 (SRVVELEGNY…TAKEQMEKRQ (214 aa)) form a coiled coil. The region spanning 352 to 420 (QPPSSFFCPI…ALRSAIEELV (69 aa)) is the U-box domain.

The catalysed reaction is S-ubiquitinyl-[E2 ubiquitin-conjugating enzyme]-L-cysteine + [acceptor protein]-L-lysine = [E2 ubiquitin-conjugating enzyme]-L-cysteine + N(6)-ubiquitinyl-[acceptor protein]-L-lysine.. It participates in protein modification; protein ubiquitination. In terms of biological role, functions as an E3 ubiquitin ligase. The polypeptide is Putative U-box domain-containing protein 58 (PUB58) (Arabidopsis thaliana (Mouse-ear cress)).